The primary structure comprises 89 residues: Small ribosomal subunit protein uS15 (89 aa).

Belongs to the universal ribosomal protein uS15 family. As to quaternary structure, part of the 30S ribosomal subunit. Forms a bridge to the 50S subunit in the 70S ribosome, contacting the 23S rRNA.

One of the primary rRNA binding proteins, it binds directly to 16S rRNA where it helps nucleate assembly of the platform of the 30S subunit by binding and bridging several RNA helices of the 16S rRNA. In terms of biological role, forms an intersubunit bridge (bridge B4) with the 23S rRNA of the 50S subunit in the ribosome. This is Small ribosomal subunit protein uS15 from Kocuria rhizophila (strain ATCC 9341 / DSM 348 / NBRC 103217 / DC2201).